The primary structure comprises 314 residues: MKKGINRVVLVGTGAVGCSYAYSMINQGVAEEFVLVDVNEAKAEGEAMDLSHAVPFSPSPTKVWSGSYADCKDADLVVITAGLPQKPGETRLDLVEKNTKIFKQIVRGIMDSGFDGIFLIATNPVDILTYVTWKESGLPKERVIGSGTTLDSARFRYMLGDYLDVDPRNVHAYIVGEHGDTELPVWSHATIGVQKLETILANNEQYKQEDLDKIFENVRDAAYHIIERKGATYYGIGMSLLRVTKAILNNENSVLTVSAYLEGQYGEKDAYVGVPAVINREGVREIVELELNEDEKAKFAHSVKVLKETMAPVL.

Residues Val16, Asp37, Lys42, Tyr68, and Gly82 to Leu83 contribute to the NAD(+) site. Residues Gln85, Arg91, and Asn123–Asp126 each bind substrate. NAD(+) contacts are provided by residues Ala121 to Asn123 and Ser146. Asp151–Arg154 contacts substrate. Beta-D-fructose 1,6-bisphosphate contacts are provided by Arg156 and His171. His178 functions as the Proton acceptor in the catalytic mechanism. A Phosphotyrosine modification is found at Tyr223. Thr232 lines the substrate pocket.

It belongs to the LDH/MDH superfamily. LDH family. Homotetramer.

Its subcellular location is the cytoplasm. The catalysed reaction is (S)-lactate + NAD(+) = pyruvate + NADH + H(+). The protein operates within fermentation; pyruvate fermentation to lactate; (S)-lactate from pyruvate: step 1/1. Allosterically activated by fructose 1,6-bisphosphate (FBP). Catalyzes the conversion of lactate to pyruvate. The polypeptide is L-lactate dehydrogenase 2 (Bacillus cereus (strain ATCC 10987 / NRS 248)).